The following is a 194-amino-acid chain: dCTP deaminase (194 aa).

DCTP is bound by residues 110 to 115 (RSSLAR), Asp128, 136 to 138 (VLE), Tyr171, Lys178, and Gln182. Glu138 functions as the Proton donor/acceptor in the catalytic mechanism. Residues 169 to 194 (RPYNKRDNAKYKDQTSAVGSRISGEN) are disordered. Residues 170-181 (PYNKRDNAKYKD) are compositionally biased toward basic and acidic residues. Positions 182–194 (QTSAVGSRISGEN) are enriched in polar residues.

The protein belongs to the dCTP deaminase family. In terms of assembly, homotrimer.

It carries out the reaction dCTP + H2O + H(+) = dUTP + NH4(+). The protein operates within pyrimidine metabolism; dUMP biosynthesis; dUMP from dCTP (dUTP route): step 1/2. Functionally, catalyzes the deamination of dCTP to dUTP. The protein is dCTP deaminase of Marinomonas sp. (strain MWYL1).